The chain runs to 1383 residues: Palladin (1383 aa).

Disordered regions lie at residues 1-22 (MSGT…EESK), 52-169 (DSET…SQLC), and 183-238 (FKAA…KSPG). The segment covering 78–96 (HPSHKETKLGEHASRRPQD) has biased composition (basic and acidic residues). Residues 191–201 (RSPNGESSSPD) are compositionally biased toward polar residues. S192 is modified (phosphoserine). A compositionally biased stretch (low complexity) spans 210 to 223 (QPSALLSASASQSP). The Ig-like C2-type 1 domain occupies 271–360 (PRFIQKLRSQ…GSDTTSAEVF (90 aa)). C292 and C344 form a disulfide bridge. S401 is modified (phosphoserine). Residues 440-539 (PPVFTKELQN…ATSTAQLVVT (100 aa)) form the Ig-like C2-type 2 domain. A disulfide bridge links C462 with C521. The interval 562–566 (FPPPP) is interaction with VASP. Disordered regions lie at residues 609 to 653 (ETNG…LAKP), 673 to 728 (AGAR…SSGS), and 740 to 846 (AQNL…RFGH). At S632 the chain carries Phosphoserine. Residue T635 is modified to Phosphothreonine. S641 is modified (phosphoserine). The tract at residues 646–676 (PPPLLAKPKLDPLKLQQLQNQIRLEQEAGAR) is interaction with LASP1. The tract at residues 676–696 (RQPPPAPRSAPPSPPFPPPPA) is interaction with SORBS2, SPIN90 and SRC. A compositionally biased stretch (pro residues) spans 677 to 697 (QPPPAPRSAPPSPPFPPPPAF). 3 positions are modified to phosphoserine: S684, S688, and S728. Over residues 745-763 (PASGHGTPASSPSSSSLPS) the composition is skewed to low complexity. Residues 766 to 831 (SPTPRQFGRA…PPPPPPLPSP (66 aa)) form an interaction with EPS8 region. The tract at residues 796–831 (SPSPPPPPPPVFSPTAAFPVPDVFPLPPPPPPLPSP) is interaction with SORBS2, SPIN90, SRC and PFN1. Composition is skewed to pro residues over residues 797 to 807 (PSPPPPPPPVF) and 817 to 830 (DVFP…PLPS). The segment at 819–823 (FPLPP) is interaction with VASP. Positions 832–846 (GQASHCSSPATRFGH) are enriched in polar residues. The interaction with ACTN stretch occupies residues 833-890 (QASHCSSPATRFGHSQTPAAFLSALLPSQPPPAAVNALGLPKGVTPAGFPKKASRTAR). 3 positions are modified to phosphoserine: S893, S979, and S984. Residues 1001–1085 (PFFEMKLKHY…MAANPQGRIS (85 aa)) enclose the Ig-like C2-type 3 domain. The disordered stretch occupies residues 1096–1125 (NQRGRSPRSPSGHPHVRRPRSRSRDSGDEN). The segment covering 1098–1108 (RGRSPRSPSGH) has biased composition (low complexity). S1101, S1104, S1106, and S1116 each carry phosphoserine. The residue at position 1118 (S1118) is a Phosphoserine; by PKB/AKT1. The residue at position 1121 (S1121) is a Phosphoserine. Ig-like C2-type domains follow at residues 1135–1226 (PHFL…LVVA) and 1233–1324 (PPVF…ARLD). 2 interaction with EZR regions span residues 1137 to 1226 (FLQA…LVVA) and 1236 to 1326 (FIEK…LDVY). Cysteines 1156 and 1208 form a disulfide. S1352 carries the phosphoserine modification.

This sequence belongs to the myotilin/palladin family. Interacts with EPS8. Interacts with LASP1. Interacts with VASP. Interacts with ACTN. Interacts with SORBS2. Interacts with PFN1. Interacts with LPP. Interacts with SPIN90. Interacts with SRC. Interacts with EZR. Interacts with RAI14. In terms of processing, phosphorylated predominantly on serines and, to a lesser extent, on tyrosines. Phosphorylation at Ser-1118 by PKB/AKT1 modulates cytoskeletal organization and cell motility. In terms of tissue distribution, detected in both muscle and non-muscle tissues. High expression in prostate, ovary, colon, and kidney. Not detected in spleen, skeletal muscle, lung and peripheral blood lymphocytes (at protein level). Protein is overexpressed in FA6, HPAF, IMIM-PC2, SUIT-2 and PancTu-II sporadic pancreatic cancer cell lines.

It localises to the cytoplasm. The protein resides in the cytoskeleton. It is found in the cell junction. Its subcellular location is the focal adhesion. The protein localises to the myofibril. It localises to the sarcomere. The protein resides in the z line. It is found in the cell projection. Its subcellular location is the ruffle. The protein localises to the podosome. It localises to the lamellipodium. The protein resides in the axon. It is found in the growth cone. Its function is as follows. Cytoskeletal protein required for organization of normal actin cytoskeleton. Roles in establishing cell morphology, motility, cell adhesion and cell-extracellular matrix interactions in a variety of cell types. May function as a scaffolding molecule with the potential to influence both actin polymerization and the assembly of existing actin filaments into higher-order arrays. Binds to proteins that bind to either monomeric or filamentous actin. Localizes at sites where active actin remodeling takes place, such as lamellipodia and membrane ruffles. Different isoforms may have functional differences. Involved in the control of morphological and cytoskeletal changes associated with dendritic cell maturation. Involved in targeting ACTN to specific subcellular foci. In Homo sapiens (Human), this protein is Palladin (PALLD).